The sequence spans 347 residues: MEKVLVTGGAGYIGSHTVLELLEAGYSPVVIDNFHNAIRGEDSMPESLRRVQELTGRSVEFEEMDILDQAALQHLFKKHSFKAVIHFAGLKAVGESVQKPLDYYRVNLTGTIQLLEIMRAHGVKNLVFSSSATVYGNPQYLPLDEAHPTGGCTNPYGKSKFFIEEMIRDLCRADTAWNAVLLRYFNPIGAHASGRIGEDPQGIPNNLMPYVSQVAIGRREALNVFGDDYATEDGTGVRDYIHVVDLAKGHIAALKKLKEQCGCRTYNLGTGTGYSVLQMVQAMEKASGKKIPYKVVARREGDVAACYANPSLAHEELGWTAALGLDRMCEDLWRWQKQNPSGFGAQA.

Residues 11–13 (GYI), 32–36 (DNFHN), 65–66 (DI), F87, and K91 each bind NAD(+). 131 to 133 (SAT) provides a ligand contact to substrate. The active-site Proton acceptor is Y156. Positions 160 and 184 each coordinate NAD(+). Substrate contacts are provided by residues 184-186 (YFN), 205-207 (NNL), 223-225 (NVF), R238, and 299-302 (REGD).

It belongs to the NAD(P)-dependent epimerase/dehydratase family. As to quaternary structure, homodimer. NAD(+) is required as a cofactor.

The enzyme catalyses UDP-alpha-D-glucose = UDP-alpha-D-galactose. It carries out the reaction UDP-N-acetyl-alpha-D-glucosamine = UDP-N-acetyl-alpha-D-galactosamine. It participates in carbohydrate metabolism; galactose metabolism. Its function is as follows. Catalyzes two distinct but analogous reactions: the reversible epimerization of UDP-glucose to UDP-galactose and the reversible epimerization of UDP-N-acetylglucosamine to UDP-N-acetylgalactosamine. The reaction with UDP-Gal plays a critical role in the Leloir pathway of galactose catabolism in which galactose is converted to the glycolytic intermediate glucose 6-phosphate. It contributes to the catabolism of dietary galactose and enables the endogenous biosynthesis of both UDP-Gal and UDP-GalNAc when exogenous sources are limited. Both UDP-sugar interconversions are important in the synthesis of glycoproteins and glycolipids. This chain is UDP-glucose 4-epimerase (Gale), found in Mus musculus (Mouse).